Consider the following 319-residue polypeptide: Biotin synthase (319 aa).

One can recognise a Radical SAM core domain in the interval 41–267 (YKGNKVKVCS…TPDIMICGGR (227 aa)). Residues Cys59, Cys63, and Cys66 each coordinate [4Fe-4S] cluster. Cys192 serves as a coordination point for [2Fe-2S] cluster.

This sequence belongs to the radical SAM superfamily. Biotin synthase family. As to quaternary structure, homodimer. [4Fe-4S] cluster serves as cofactor. The cofactor is [2Fe-2S] cluster.

The enzyme catalyses (4R,5S)-dethiobiotin + (sulfur carrier)-SH + 2 reduced [2Fe-2S]-[ferredoxin] + 2 S-adenosyl-L-methionine = (sulfur carrier)-H + biotin + 2 5'-deoxyadenosine + 2 L-methionine + 2 oxidized [2Fe-2S]-[ferredoxin]. It participates in cofactor biosynthesis; biotin biosynthesis; biotin from 7,8-diaminononanoate: step 2/2. In terms of biological role, catalyzes the conversion of dethiobiotin (DTB) to biotin by the insertion of a sulfur atom into dethiobiotin via a radical-based mechanism. This Endomicrobium trichonymphae protein is Biotin synthase.